The following is a 640-amino-acid chain: Threonine--tRNA ligase (640 aa).

Residues Met-1–Thr-59 form the TGS domain. The tract at residues Asp-240–Pro-531 is catalytic. Residues Cys-332, His-383, and His-508 each coordinate Zn(2+).

The protein belongs to the class-II aminoacyl-tRNA synthetase family. Homodimer. Zn(2+) serves as cofactor.

The protein localises to the cytoplasm. The enzyme catalyses tRNA(Thr) + L-threonine + ATP = L-threonyl-tRNA(Thr) + AMP + diphosphate + H(+). In terms of biological role, catalyzes the attachment of threonine to tRNA(Thr) in a two-step reaction: L-threonine is first activated by ATP to form Thr-AMP and then transferred to the acceptor end of tRNA(Thr). Also edits incorrectly charged L-seryl-tRNA(Thr). The chain is Threonine--tRNA ligase from Thermotoga sp. (strain RQ2).